Reading from the N-terminus, the 56-residue chain is Large ribosomal subunit protein bL32 (56 aa).

The interval 1-34 (MAVQQNKKSRSKRGMRRSHDSLSTAQLSVDATSG) is disordered. Residues 7-16 (KKSRSKRGMR) are compositionally biased toward basic residues. Over residues 21–31 (SLSTAQLSVDA) the composition is skewed to polar residues.

It belongs to the bacterial ribosomal protein bL32 family.

This is Large ribosomal subunit protein bL32 from Shewanella frigidimarina (strain NCIMB 400).